A 227-amino-acid polypeptide reads, in one-letter code: MKEFFITGTDTDAGKTHVTSLLLKLLAQHKKQAIGFKPLASGCEMAFDQLVNADALILMESATVSAKYDIINPFAFAPAIAPHIAAEQAGVTITADKLSSAYKNVKQQGADYILTEGAGGWALPISNTDYLYNWVKAEQLPVILVVGMKLGCLNHALLTAAHMQSMGINCIGWIANQVDPNMDEYQANLDSLKLRLPFPILAISPYSEQTPKLQIYKTLLENFALNT.

ATP is bound at residue 12-17 (DAGKTH). A Mg(2+)-binding site is contributed by Thr-16. The active site involves Lys-37. Residue Ser-41 coordinates substrate. ATP contacts are provided by residues Asp-54, 116–119 (EGAG), 176–177 (NQ), and 205–207 (PYS). Mg(2+)-binding residues include Asp-54 and Glu-116.

This sequence belongs to the dethiobiotin synthetase family. As to quaternary structure, homodimer. The cofactor is Mg(2+).

It is found in the cytoplasm. It catalyses the reaction (7R,8S)-7,8-diammoniononanoate + CO2 + ATP = (4R,5S)-dethiobiotin + ADP + phosphate + 3 H(+). It functions in the pathway cofactor biosynthesis; biotin biosynthesis; biotin from 7,8-diaminononanoate: step 1/2. In terms of biological role, catalyzes a mechanistically unusual reaction, the ATP-dependent insertion of CO2 between the N7 and N8 nitrogen atoms of 7,8-diaminopelargonic acid (DAPA, also called 7,8-diammoniononanoate) to form a ureido ring. The polypeptide is ATP-dependent dethiobiotin synthetase BioD (Pseudoalteromonas translucida (strain TAC 125)).